Reading from the N-terminus, the 255-residue chain is MEFVQYACNGAVAEIILNRPDAHHALNEQMLSELKEAVEMAAASEALIVLLRGSGKGFSAGGDIRMMTSEHDPDQFKRLMDTIEAVTLNLYQMKKVTIAAIHGAAAGLGLSLALCADIVLAEKNAVLAMNFIGIGLVPDGGGHYLLKKRIGEAKAKKLIWSGKKLSASEAADMGLLDGTFAGDPAEGARPIIETLLASPLLAMIETKGIFQSLQIEELKKVLSLERSAQERMRRTKDHQEGIRAFLEKREPKFQA.

Transmembrane regions (helical) follow at residues 96-116 and 126-146; these read VTIAAIHGAAAGLGLSLALCA and VLAMNFIGIGLVPDGGGHYLL.

It belongs to the enoyl-CoA hydratase/isomerase family.

It localises to the cell membrane. This chain is Putative enoyl-CoA hydratase/isomerase YhaR (yhaR), found in Bacillus subtilis (strain 168).